Here is a 506-residue protein sequence, read N- to C-terminus: Maturase K (506 aa).

It belongs to the intron maturase 2 family. MatK subfamily.

Its subcellular location is the plastid. The protein resides in the chloroplast. Functionally, usually encoded in the trnK tRNA gene intron. Probably assists in splicing its own and other chloroplast group II introns. This is Maturase K from Atractylodes lancea (Atractylodes japonica).